Here is a 231-residue protein sequence, read N- to C-terminus: Orotidine 5'-phosphate decarboxylase (231 aa).

Substrate is bound by residues Asp-11, Lys-33, 60–69 (DLKFHDIPNT), Thr-120, Arg-181, Gln-190, Gly-210, and Arg-211. Lys-62 functions as the Proton donor in the catalytic mechanism.

It belongs to the OMP decarboxylase family. Type 1 subfamily. In terms of assembly, homodimer.

The catalysed reaction is orotidine 5'-phosphate + H(+) = UMP + CO2. It functions in the pathway pyrimidine metabolism; UMP biosynthesis via de novo pathway; UMP from orotate: step 2/2. In terms of biological role, catalyzes the decarboxylation of orotidine 5'-monophosphate (OMP) to uridine 5'-monophosphate (UMP). This Colwellia psychrerythraea (strain 34H / ATCC BAA-681) (Vibrio psychroerythus) protein is Orotidine 5'-phosphate decarboxylase.